We begin with the raw amino-acid sequence, 140 residues long: Putative pre-16S rRNA nuclease (140 aa).

The protein belongs to the YqgF nuclease family.

The protein localises to the cytoplasm. Its function is as follows. Could be a nuclease involved in processing of the 5'-end of pre-16S rRNA. This is Putative pre-16S rRNA nuclease from Vibrio vulnificus (strain CMCP6).